Consider the following 476-residue polypeptide: MHFSSYQDLRSSLLAGQTTCEEVTKSYLERIDRHCDDNIFLAVFHEQALSRARSLDRRFSEGGTPGLLFGMPMAIKDNISIKGARLTCASRILENYESVYDATVIERLLNEDAVFIGKTNMDEFAMGSSNENSAFGPVANPFDKTRVPGGSSGGSAAAVAAGLALVALGSDTGGSVRQPAGFCDIVGLKPTYGRISRYGLVAFASSFDQIGVLARNSDDAALVLGVMAGADERDATSSRHAVSNYAEEMAAVSPDGLKIGVPKEFFHESLNPDVARLVKAKLEELREKGAELVDITLPASDYAIAAYYILVTAEASSNLARFDGARYGYRSPNCDNLSAMYVNSRTEGFGKEVKRRIMLGTYVLSAGYYDTYYKKAQQVRRVFQDRYREALEKVDVIAGPTSPFPPFGIGDKMDDPLEMYLADVFTVPASIVGMPAISVPIGYDSLNLPVGMHLICNFFEEGKLLGIAGLMQHSIV.

Residues lysine 76 and serine 151 each act as charge relay system in the active site. Serine 175 functions as the Acyl-ester intermediate in the catalytic mechanism.

Belongs to the amidase family. GatA subfamily. As to quaternary structure, heterotrimer of A, B and C subunits.

It carries out the reaction L-glutamyl-tRNA(Gln) + L-glutamine + ATP + H2O = L-glutaminyl-tRNA(Gln) + L-glutamate + ADP + phosphate + H(+). Its function is as follows. Allows the formation of correctly charged Gln-tRNA(Gln) through the transamidation of misacylated Glu-tRNA(Gln) in organisms which lack glutaminyl-tRNA synthetase. The reaction takes place in the presence of glutamine and ATP through an activated gamma-phospho-Glu-tRNA(Gln). This Chlorobium phaeobacteroides (strain DSM 266 / SMG 266 / 2430) protein is Glutamyl-tRNA(Gln) amidotransferase subunit A.